The following is a 546-amino-acid chain: Chaperonin GroEL 2 (546 aa).

Residues 30 to 33 (TLGP), Lys-51, 87 to 91 (DGTTT), Gly-415, 479 to 481 (NAA), and Asp-495 each bind ATP. The interval 524 to 546 (APKDAPPAQPAGVPGAGGTGFDF) is disordered. The segment covering 537–546 (PGAGGTGFDF) has biased composition (gly residues).

Belongs to the chaperonin (HSP60) family. As to quaternary structure, forms a cylinder of 14 subunits composed of two heptameric rings stacked back-to-back. Interacts with the co-chaperonin GroES.

The protein localises to the cytoplasm. It catalyses the reaction ATP + H2O + a folded polypeptide = ADP + phosphate + an unfolded polypeptide.. Functionally, together with its co-chaperonin GroES, plays an essential role in assisting protein folding. The GroEL-GroES system forms a nano-cage that allows encapsulation of the non-native substrate proteins and provides a physical environment optimized to promote and accelerate protein folding. The protein is Chaperonin GroEL 2 of Burkholderia thailandensis (strain ATCC 700388 / DSM 13276 / CCUG 48851 / CIP 106301 / E264).